The sequence spans 445 residues: RNA pseudouridine synthase 2, chloroplastic (445 aa).

The N-terminal 44 residues, methionine 1–asparagine 44, are a transit peptide targeting the chloroplast. The tract at residues alanine 47–proline 66 is disordered. Residues serine 72–aspartate 147 enclose the S4 RNA-binding domain. The active site involves aspartate 235.

It belongs to the pseudouridine synthase RluA family.

The protein localises to the plastid. It localises to the chloroplast. The enzyme catalyses a uridine in RNA = a pseudouridine in RNA. In Oryza sativa subsp. japonica (Rice), this protein is RNA pseudouridine synthase 2, chloroplastic.